Reading from the N-terminus, the 95-residue chain is uncharacterized protein (95 aa).

A helical membrane pass occupies residues 12-32 (IASLVVSVVVLLIGLILWFFI).

Its subcellular location is the cell membrane. This is an uncharacterized protein from Escherichia coli O6:H1 (strain CFT073 / ATCC 700928 / UPEC).